Consider the following 473-residue polypeptide: ATP synthase subunit beta (473 aa).

Gly156–Thr163 contributes to the ATP binding site.

This sequence belongs to the ATPase alpha/beta chains family. In terms of assembly, F-type ATPases have 2 components, CF(1) - the catalytic core - and CF(0) - the membrane proton channel. CF(1) has five subunits: alpha(3), beta(3), gamma(1), delta(1), epsilon(1). CF(0) has three main subunits: a(1), b(2) and c(9-12). The alpha and beta chains form an alternating ring which encloses part of the gamma chain. CF(1) is attached to CF(0) by a central stalk formed by the gamma and epsilon chains, while a peripheral stalk is formed by the delta and b chains.

It is found in the cell inner membrane. The catalysed reaction is ATP + H2O + 4 H(+)(in) = ADP + phosphate + 5 H(+)(out). Functionally, produces ATP from ADP in the presence of a proton gradient across the membrane. The catalytic sites are hosted primarily by the beta subunits. In Desulfovibrio desulfuricans (strain ATCC 27774 / DSM 6949 / MB), this protein is ATP synthase subunit beta.